A 225-amino-acid polypeptide reads, in one-letter code: Ferric nitrobindin-like protein (225 aa).

A GXWXGXG motif is present at residues 78-84; the sequence is GVWRGTG.

It belongs to the nitrobindin family.

This chain is Ferric nitrobindin-like protein, found in Corynebacterium diphtheriae (strain ATCC 700971 / NCTC 13129 / Biotype gravis).